We begin with the raw amino-acid sequence, 197 residues long: NADH-quinone oxidoreductase subunit C (197 aa).

This sequence belongs to the complex I 30 kDa subunit family. NDH-1 is composed of 14 different subunits. Subunits NuoB, C, D, E, F, and G constitute the peripheral sector of the complex.

It is found in the cell inner membrane. It catalyses the reaction a quinone + NADH + 5 H(+)(in) = a quinol + NAD(+) + 4 H(+)(out). NDH-1 shuttles electrons from NADH, via FMN and iron-sulfur (Fe-S) centers, to quinones in the respiratory chain. The immediate electron acceptor for the enzyme in this species is believed to be ubiquinone. Couples the redox reaction to proton translocation (for every two electrons transferred, four hydrogen ions are translocated across the cytoplasmic membrane), and thus conserves the redox energy in a proton gradient. This Methylobacillus flagellatus (strain ATCC 51484 / DSM 6875 / VKM B-1610 / KT) protein is NADH-quinone oxidoreductase subunit C.